Reading from the N-terminus, the 91-residue chain is DNA-directed RNA polymerase subunit omega (91 aa).

It belongs to the RNA polymerase subunit omega family. As to quaternary structure, the RNAP catalytic core consists of 2 alpha, 1 beta, 1 beta' and 1 omega subunit. When a sigma factor is associated with the core the holoenzyme is formed, which can initiate transcription.

The catalysed reaction is RNA(n) + a ribonucleoside 5'-triphosphate = RNA(n+1) + diphosphate. Promotes RNA polymerase assembly. Latches the N- and C-terminal regions of the beta' subunit thereby facilitating its interaction with the beta and alpha subunits. The sequence is that of DNA-directed RNA polymerase subunit omega from Sodalis glossinidius (strain morsitans).